Here is a 258-residue protein sequence, read N- to C-terminus: Acyl-[acyl-carrier-protein]--UDP-N-acetylglucosamine O-acyltransferase (258 aa).

It belongs to the transferase hexapeptide repeat family. LpxA subfamily. As to quaternary structure, homotrimer.

The protein resides in the cytoplasm. It carries out the reaction a (3R)-hydroxyacyl-[ACP] + UDP-N-acetyl-alpha-D-glucosamine = a UDP-3-O-[(3R)-3-hydroxyacyl]-N-acetyl-alpha-D-glucosamine + holo-[ACP]. The protein operates within glycolipid biosynthesis; lipid IV(A) biosynthesis; lipid IV(A) from (3R)-3-hydroxytetradecanoyl-[acyl-carrier-protein] and UDP-N-acetyl-alpha-D-glucosamine: step 1/6. In terms of biological role, involved in the biosynthesis of lipid A, a phosphorylated glycolipid that anchors the lipopolysaccharide to the outer membrane of the cell. This is Acyl-[acyl-carrier-protein]--UDP-N-acetylglucosamine O-acyltransferase from Myxococcus xanthus (strain DK1622).